The chain runs to 354 residues: D-alanine--D-alanine ligase (354 aa).

The 205-residue stretch at 140-344 folds into the ATP-grasp domain; the sequence is KRLLRDSGLS…ISTLLTRLIM (205 aa). 170–225 provides a ligand contact to ATP; sequence ADMFGLPFFVKPVNQGSSIGVAKVNDDYSFHSALDIAFFYSHKIIIESCIAGRELE. Mg(2+) contacts are provided by D298, E311, and N313.

It belongs to the D-alanine--D-alanine ligase family. It depends on Mg(2+) as a cofactor. Mn(2+) serves as cofactor.

The protein resides in the cytoplasm. It carries out the reaction 2 D-alanine + ATP = D-alanyl-D-alanine + ADP + phosphate + H(+). It participates in cell wall biogenesis; peptidoglycan biosynthesis. Cell wall formation. The polypeptide is D-alanine--D-alanine ligase (Blochmanniella floridana).